The chain runs to 156 residues: Small ribosomal subunit protein uS7 (156 aa).

Belongs to the universal ribosomal protein uS7 family. In terms of assembly, part of the 30S ribosomal subunit. Contacts proteins S9 and S11.

One of the primary rRNA binding proteins, it binds directly to 16S rRNA where it nucleates assembly of the head domain of the 30S subunit. Is located at the subunit interface close to the decoding center, probably blocks exit of the E-site tRNA. The polypeptide is Small ribosomal subunit protein uS7 (Roseobacter denitrificans (strain ATCC 33942 / OCh 114) (Erythrobacter sp. (strain OCh 114))).